Consider the following 491-residue polypeptide: Probable cytosol aminopeptidase (491 aa).

Mn(2+)-binding residues include Lys-261 and Asp-266. Residue Lys-273 is part of the active site. Mn(2+) is bound by residues Asp-284, Asp-343, and Glu-345. Residue Arg-347 is part of the active site.

It belongs to the peptidase M17 family. Mn(2+) serves as cofactor.

The protein localises to the cytoplasm. It catalyses the reaction Release of an N-terminal amino acid, Xaa-|-Yaa-, in which Xaa is preferably Leu, but may be other amino acids including Pro although not Arg or Lys, and Yaa may be Pro. Amino acid amides and methyl esters are also readily hydrolyzed, but rates on arylamides are exceedingly low.. It carries out the reaction Release of an N-terminal amino acid, preferentially leucine, but not glutamic or aspartic acids.. Its function is as follows. Presumably involved in the processing and regular turnover of intracellular proteins. Catalyzes the removal of unsubstituted N-terminal amino acids from various peptides. In Geobacter sp. (strain M21), this protein is Probable cytosol aminopeptidase.